The primary structure comprises 209 residues: Thymidine kinase (209 aa).

ATP is bound by residues 16–23 (GPMFAGKT) and 90–93 (DESQ). Glu-91 functions as the Proton acceptor in the catalytic mechanism.

Belongs to the thymidine kinase family. As to quaternary structure, homotetramer.

The protein localises to the cytoplasm. It carries out the reaction thymidine + ATP = dTMP + ADP + H(+). The polypeptide is Thymidine kinase (Aster yellows witches'-broom phytoplasma (strain AYWB)).